The primary structure comprises 415 residues: Protein PIN-LIKES 4 (415 aa).

Over 1–13 (MKLLELFIASSKP) the chain is Lumenal. Residues 14–34 (VVETLLITSVGFYLALDTVNL) traverse the membrane as a helical segment. The Cytoplasmic portion of the chain corresponds to 35-44 (LGHDARKHLN). The chain crosses the membrane as a helical span at residues 45–61 (NIVFYVFSPSLIGSRLA). The Lumenal segment spans residues 62 to 75 (DSVTYESLVKMWFM). Residues 76-96 (PVNVLLTFMIGSLLGWIVIVI) form a helical membrane-spanning segment. The Cytoplasmic portion of the chain corresponds to 97-106 (TKPPSQLRGL). Residues 107-127 (IISCCASGNLGTMPLIIIPAI) traverse the membrane as a helical segment. The Lumenal portion of the chain corresponds to 128 to 143 (CKEKGGPFGDSESCEK). Residues 144-161 (YGMGYVTLSMTAFFISVY) form a helical membrane-spanning segment. Over 162 to 244 (KHDTNWYVSG…RVVSLSKKVN (83 aa)) the chain is Cytoplasmic. Residues 245–265 (LGSIFAPATIAAIIALVIGLI) form a helical membrane-spanning segment. Residues 266–285 (TPLRNLIIGTVAPFRVIQDS) are Lumenal-facing. Residues 286 to 306 (LTLLGDGAIPAMTLILGGNLL) form a helical membrane-spanning segment. The Cytoplasmic segment spans residues 307-322 (KGMRRSEVRSSEMKNS). The chain crosses the membrane as a helical span at residues 323–343 (CIIGVLVARYILLPVSGVLLV). The Lumenal segment spans residues 344–355 (RGAYKLDLVTSE). The chain crosses the membrane as a helical span at residues 356-376 (PLYQFVLLLQYAVPPAMNLGT). The Cytoplasmic segment spans residues 377 to 389 (KTQLFGAGESECS). Residues 390–410 (VIMLWTYSLAAVSLTVWPTFF) form a helical membrane-spanning segment. Residues 411–415 (MWLVT) are Lumenal-facing.

Belongs to the auxin efflux carrier (TC 2.A.69.2) family. In terms of tissue distribution, expressed in seedlings, rosette and cauline leaves, stems, flowers and siliques.

It localises to the endoplasmic reticulum membrane. Functionally, involved in cellular auxin homeostasis by regulating auxin metabolism. Regulates intracellular auxin accumulation at the endoplasmic reticulum and thus auxin availability for nuclear auxin signaling. This Arabidopsis thaliana (Mouse-ear cress) protein is Protein PIN-LIKES 4.